Here is a 228-residue protein sequence, read N- to C-terminus: UPF0758 protein Gura_4138 (228 aa).

An MPN domain is found at arginine 106–methionine 228. 3 residues coordinate Zn(2+): histidine 177, histidine 179, and aspartate 190. The JAMM motif motif lies at histidine 177–aspartate 190.

This sequence belongs to the UPF0758 family.

The polypeptide is UPF0758 protein Gura_4138 (Geotalea uraniireducens (strain Rf4) (Geobacter uraniireducens)).